The sequence spans 317 residues: Tyrosine--tRNA ligase (317 aa).

Position 33 (Y33) interacts with L-tyrosine. The 'HIGH' region motif lies at 38–46 (PSGKIHMGH). Residues Y155, Q159, D162, and Q177 each coordinate L-tyrosine. Residues 211–215 (KMASS) carry the 'KMSKS' region motif. Residue S214 coordinates ATP.

It belongs to the class-I aminoacyl-tRNA synthetase family. TyrS type 3 subfamily. Homodimer.

It localises to the cytoplasm. It catalyses the reaction tRNA(Tyr) + L-tyrosine + ATP = L-tyrosyl-tRNA(Tyr) + AMP + diphosphate + H(+). Its function is as follows. Catalyzes the attachment of tyrosine to tRNA(Tyr) in a two-step reaction: tyrosine is first activated by ATP to form Tyr-AMP and then transferred to the acceptor end of tRNA(Tyr). The polypeptide is Tyrosine--tRNA ligase (Methanosarcina barkeri (strain Fusaro / DSM 804)).